A 457-amino-acid polypeptide reads, in one-letter code: MQKYISEARLLLALAIPVILAQIAQTAMGFVDTVMAGGYSATDMAAVAIGTSIWLPAILFGHGLLLALTPVIAQLNGSGRRERIAHQVRQGFWLAGFVSVLIMLVLWNAGYIIRSMENIDPALADKAVGYLRALLWGAPGYLFFQVARNQCEGLAKTKPGMVMGFIGLLVNIPVNYIFIYGHFGMPELGGVGCGVATAAVYWVMFLAMVSYIKRARSMRDIRNEKGTAKPDPAVMKRLIQLGLPIALALFFEVTLFAVVALLVSPLGIVDVAGHQIALNFSSLMFVLPMSLAAAVTIRVGYRLGQGSTLDAQTAARTGLMVGVCMATLTAIFTVSLREQIALLYNDNPEVVTLAAHLMLLAAVYQISDSIQVIGSGILRGYKDTRSIFYITFTAYWVLGLPSGYILALTDLVVEPMGPAGFWIGFIIGLTSAAIMMMLRMRFLQRLPSVIILQRASR.

12 helical membrane passes run 11–31, 53–73, 93–113, 127–147, 160–180, 189–209, 243–263, 276–296, 314–334, 350–370, 387–407, and 418–438; these read LLALAIPVILAQIAQTAMGFV, IWLPAILFGHGLLLALTPVIA, WLAGFVSVLIMLVLWNAGYII, AVGYLRALLWGAPGYLFFQVA, GMVMGFIGLLVNIPVNYIFIY, GGVGCGVATAAVYWVMFLAMV, LPIALALFFEVTLFAVVALLV, IALNFSSLMFVLPMSLAAAVT, AARTGLMVGVCMATLTAIFTV, VVTLAAHLMLLAAVYQISDSI, IFYITFTAYWVLGLPSGYILA, and PAGFWIGFIIGLTSAAIMMML.

Belongs to the multi antimicrobial extrusion (MATE) (TC 2.A.66.1) family. MdtK subfamily.

Its subcellular location is the cell inner membrane. Multidrug efflux pump that functions probably as a Na(+)/drug antiporter. The protein is Multidrug resistance protein MdtK of Escherichia coli O139:H28 (strain E24377A / ETEC).